Consider the following 921-residue polypeptide: Probable dipeptidyl-aminopeptidase B (921 aa).

2 disordered regions span residues 1-33 (MAGHPEENAQLLSTEQESMSRNSSDSVASTAST) and 45-66 (VAANGSEKPTMVTPKFPPRGER). At 1–109 (MAGHPEENAQ…NKSVDKKLRR (109 aa)) the chain is on the cytoplasmic side. The span at 10–22 (QLLSTEQESMSRN) shows a compositional bias: polar residues. Residues 23–33 (SSDSVASTAST) are compositionally biased toward low complexity. Residues 110–130 (LIWIIGGVFIGAWVLALFIFL) form a helical; Signal-anchor for type II membrane protein membrane-spanning segment. The Vacuolar portion of the chain corresponds to 131 to 921 (GKQAYKHSSE…VPLEIDAAKV (791 aa)). Positions 138-157 (SSESPHDPQATSSRGSGKKV) are disordered. N-linked (GlcNAc...) asparagine glycosylation is present at Asn362. The Charge relay system role is filled by Ser768. A glycan (N-linked (GlcNAc...) asparagine) is linked at Asn822. Residues Asp845 and His878 each act as charge relay system in the active site.

This sequence belongs to the peptidase S9B family.

It is found in the vacuole membrane. The enzyme catalyses Release of an N-terminal dipeptide, Xaa-Yaa-|-Zaa-, from a polypeptide, preferentially when Yaa is Pro, provided Zaa is neither Pro nor hydroxyproline.. Its function is as follows. Type IV dipeptidyl-peptidase which removes N-terminal dipeptides sequentially from polypeptides having unsubstituted N-termini provided that the penultimate residue is proline. The polypeptide is Probable dipeptidyl-aminopeptidase B (dapB) (Botryotinia fuckeliana (strain B05.10) (Noble rot fungus)).